Reading from the N-terminus, the 820-residue chain is Trimethylamine-N-oxide reductase (820 aa).

A signal peptide (tat-type signal) is located at residues 1-33 (MAITRRSFLKGVATTSAASIIGPSLLTSVSAQA). Residue Ser179 participates in Mo-bis(molybdopterin guanine dinucleotide) binding.

It belongs to the prokaryotic molybdopterin-containing oxidoreductase family. It depends on Mo-bis(molybdopterin guanine dinucleotide) as a cofactor. Post-translationally, predicted to be exported by the Tat system. The position of the signal peptide cleavage has not been experimentally proven.

The protein localises to the periplasm. The catalysed reaction is trimethylamine + 2 Fe(III)-[cytochrome c] + H2O = trimethylamine N-oxide + 2 Fe(II)-[cytochrome c] + 3 H(+). In terms of biological role, reduces trimethylamine-N-oxide (TMAO) into trimethylamine; an anaerobic reaction coupled to energy-yielding reactions. The protein is Trimethylamine-N-oxide reductase (torA) of Vibrio cholerae serotype O1 (strain ATCC 39315 / El Tor Inaba N16961).